Here is a 310-residue protein sequence, read N- to C-terminus: UPF0761 membrane protein VFMJ11_0098 (310 aa).

6 helical membrane-spanning segments follow: residues 34-54 (YMAY…LSVL), 97-117 (MTAV…SSID), 136-156 (FSLY…SLAA), 178-198 (LLGW…YLLV), 207-227 (HALI…VGFA), and 242-262 (ALAA…IVLI).

Belongs to the UPF0761 family.

It is found in the cell inner membrane. In Aliivibrio fischeri (strain MJ11) (Vibrio fischeri), this protein is UPF0761 membrane protein VFMJ11_0098.